The primary structure comprises 544 residues: Cytochrome P450 monooxygenase tenB (544 aa).

A helical membrane pass occupies residues 13-33 (LGYYEKVTGILGVVSIILLFW). Over residues 438-448 (FDPFRFSRASK) the composition is skewed to basic and acidic residues. The disordered stretch occupies residues 438–467 (FDPFRFSRASKDDDDDDDDDGRSTSSHTKD). Cys-486 is a heme binding site.

It belongs to the cytochrome P450 family. Requires heme as cofactor.

The protein localises to the membrane. It functions in the pathway secondary metabolite biosynthesis. Its function is as follows. Cytochrome P450 monooxygenase; part of the gene cluster that mediates the biosynthesis of tenellin-type 2-pyridones, iron-chelating compounds involved in iron stress tolerance, competition with the natural competitor fungus Metarhizium robertsii and insect hosts infection. TenB catalyzes the selective N-hydroxylation of the 2-pyridone nitrogen of yield tellinin and 15-hydroxytellenin (15-HT), respectively. The pathway begins with the assembly of the polyketide-amino acid backbone by the hybrid PKS-NRPS tenS with the help of the enoyl reductase tenC. These enzymes catalyze the synthesis of the pyrrolidine-2-dione intermediates pretellinin A, 11-hydropretellenin A, 12-hydropretellenin A, 13-hydropretellenin A, 14-hydropretellenin A, 12-oxopretellenin A and prototellinin D. The cytochrome P450 monooxygenase tenA then catalyzes an oxidative ring expansion of pretenellin A and 14-hydropretellenin A to form the 2-pyridone core, leading to pretenellin B and pyridovericin, respectively. The cytochrome P450 monooxygenase tenB is then required for the selective N-hydroxylation of the 2-pyridone nitrogen of yield tellinin and 15-hydroxytellenin (15-HT), respectively. The UDP-glucosyltransferase GT1 and the methyltransferase MT1, located outside the tenS gene cluster, contribute to the stepwise glycosylation and methylation of 15-HT to obtain the glycoside pyridovericin-N-O-(4-O-methyl-beta-D-glucopyranoside) (PMGP). Additional related compounds such as 1-O-methyl-15-HT, (8Z)-1-O-methyl-15-HT, and O-methyltenellin A are also produced but the enzymes involved in their biosynthesis have still to be determined. In Beauveria bassiana (strain ARSEF 2860) (White muscardine disease fungus), this protein is Cytochrome P450 monooxygenase tenB.